Here is a 187-residue protein sequence, read N- to C-terminus: Nucleoside-triphosphatase THEP1 (187 aa).

ATP-binding positions include 9-16 and 100-107; these read GRPGVGKT and LIAIDEIG.

The protein belongs to the THEP1 NTPase family.

It carries out the reaction a ribonucleoside 5'-triphosphate + H2O = a ribonucleoside 5'-diphosphate + phosphate + H(+). Has nucleotide phosphatase activity towards ATP, GTP, CTP, TTP and UTP. May hydrolyze nucleoside diphosphates with lower efficiency. In Hyperthermus butylicus (strain DSM 5456 / JCM 9403 / PLM1-5), this protein is Nucleoside-triphosphatase THEP1.